The chain runs to 105 residues: Cytochrome c-553-like (105 aa).

The N-terminal stretch at 1–29 is a signal peptide; that stretch reads MAGIVSLVILAVALFSFMNFDPYVSQVLA. The heme c site is built by Cys45, Cys48, His49, and Met85.

Binds 1 heme c group covalently per subunit.

This chain is Cytochrome c-553-like (cytM), found in Synechocystis sp. (strain ATCC 27184 / PCC 6803 / Kazusa).